Consider the following 250-residue polypeptide: MSAYRHAVERIDSSDLACGVVLHSAPGYPAFPVRLATEIFQRALARLPGDGPVTLWDPCCGSGYLLTVLGLLHRRSLRQVIASDVDPAPLELAAKNLALLSPAGLTARELERREQSERFGKPSYLEAAQAARRLRERLTAEGGALPCAIRTADVFDPRALSAVLAGSAPDVVLTDLPYGERTHWEGQVPAQPVAGLLRSLASALPAHAVIAVTDRSRKIPVAPVKALERLKIGTRSAVLVRAADVLEAGP.

The catalysed reaction is guanosine(2535) in 23S rRNA + S-adenosyl-L-methionine = N(1)-methylguanosine(2535) in 23S rRNA + S-adenosyl-L-homocysteine + H(+). In terms of biological role, specifically methylates the guanine-2535 in 23S ribosomal RNA. Confers resistance to antibiotic avilamycin, an orthosomycin antibiotic. The polypeptide is 23S rRNA (guanine(2535)-N(1))-methyltransferase (aviRa) (Streptomyces viridochromogenes).